The following is a 198-amino-acid chain: Probable chemoreceptor glutamine deamidase CheD (198 aa).

Belongs to the CheD family.

The catalysed reaction is L-glutaminyl-[protein] + H2O = L-glutamyl-[protein] + NH4(+). Probably deamidates glutamine residues to glutamate on methyl-accepting chemotaxis receptors (MCPs), playing an important role in chemotaxis. The sequence is that of Probable chemoreceptor glutamine deamidase CheD from Xanthomonas axonopodis pv. citri (strain 306).